Reading from the N-terminus, the 605-residue chain is Glutamine--fructose-6-phosphate aminotransferase [isomerizing] (605 aa).

Catalysis depends on C2, which acts as the Nucleophile; for GATase activity. One can recognise a Glutamine amidotransferase type-2 domain in the interval 2–216 (CGIVGIVGHQ…DGDWAVIGKT (215 aa)). 2 consecutive SIS domains span residues 280–420 (DSDA…ARGT) and 454–595 (LSRE…VDQP). Catalysis depends on K600, which acts as the For Fru-6P isomerization activity.

The protein localises to the cytoplasm. The catalysed reaction is D-fructose 6-phosphate + L-glutamine = D-glucosamine 6-phosphate + L-glutamate. Its function is as follows. Involved in the production of the root hair deformation (HAD) factor specifically on medicago. This is Glutamine--fructose-6-phosphate aminotransferase [isomerizing] (nodM) from Rhizobium meliloti (Ensifer meliloti).